The chain runs to 368 residues: MTIAAAPPSSRFRAVRIWLTLVAALIAVMVLVGGATRLTESGLSIVEWKPVTGSLPPLTDTQWHAAFDGYKQIPQYRELNAGMTLDQFKTIFWWEWSHRLLGRVIGIVYLLPFLWFLWRGAIGPEWKRALWIIFALGALQGAVGWWMVASGLSQRTEVSQVRLATHLSLALIIYAAIVWTLRRMADGARVAAPVRLRVTALALLGLTFVQLYAGALVAGLRAGRLYNTWPEIDGALIPDAARLWFESPWWKNLFDNHLTVQFDHRMLAYALWTLAALHMIDALRTRAAARGAVQLFLALTAQATLGIFTVLYAAPIDLALVHQAMALVVLTLAVLQAERLTATRKDRTARDRGAAGRLAIPSEPFPSA.

The next 5 helical transmembrane spans lie at 14–34, 104–124, 129–149, 161–181, and 200–220; these read AVRIWLTLVAALIAVMVLVGG, VIGIVYLLPFLWFLWRGAIGP, ALWIIFALGALQGAVGWWMVA, VRLATHLSLALIIYAAIVWTL, and ALALLGLTFVQLYAGALVAGL. His264 serves as a coordination point for heme. Helical transmembrane passes span 266–283, 296–316, and 318–338; these read MLAYALWTLAALHMIDAL, FLALTAQATLGIFTVLYAAPI, and LALVHQAMALVVLTLAVLQAE. Position 322 (His322) interacts with heme.

This sequence belongs to the COX15/CtaA family. Type 2 subfamily. In terms of assembly, interacts with CtaB. It depends on heme b as a cofactor.

It is found in the cell membrane. The catalysed reaction is Fe(II)-heme o + 2 A + H2O = Fe(II)-heme a + 2 AH2. Its pathway is porphyrin-containing compound metabolism; heme A biosynthesis; heme A from heme O: step 1/1. Its function is as follows. Catalyzes the conversion of heme O to heme A by two successive hydroxylations of the methyl group at C8. The first hydroxylation forms heme I, the second hydroxylation results in an unstable dihydroxymethyl group, which spontaneously dehydrates, resulting in the formyl group of heme A. In Rhodopseudomonas palustris (strain ATCC BAA-98 / CGA009), this protein is Heme A synthase.